Reading from the N-terminus, the 463-residue chain is ATP synthase subunit beta (463 aa).

Position 152–159 (152–159) interacts with ATP; sequence GGAGVGKT.

It belongs to the ATPase alpha/beta chains family. As to quaternary structure, F-type ATPases have 2 components, CF(1) - the catalytic core - and CF(0) - the membrane proton channel. CF(1) has five subunits: alpha(3), beta(3), gamma(1), delta(1), epsilon(1). CF(0) has three main subunits: a(1), b(2) and c(9-12). The alpha and beta chains form an alternating ring which encloses part of the gamma chain. CF(1) is attached to CF(0) by a central stalk formed by the gamma and epsilon chains, while a peripheral stalk is formed by the delta and b chains.

It localises to the cell inner membrane. The enzyme catalyses ATP + H2O + 4 H(+)(in) = ADP + phosphate + 5 H(+)(out). Its function is as follows. Produces ATP from ADP in the presence of a proton gradient across the membrane. The catalytic sites are hosted primarily by the beta subunits. This chain is ATP synthase subunit beta, found in Shewanella baltica (strain OS223).